A 682-amino-acid polypeptide reads, in one-letter code: Serine/threonine-protein kinase PLK2 (682 aa).

Residues 25–67 (ACGGDSKKKRPQQPSEDGQPQAQVTPAAPHHHHHHSHSGPEIS) form a disordered region. The span at 36–48 (QQPSEDGQPQAQV) shows a compositional bias: polar residues. In terms of domain architecture, Protein kinase spans 79–331 (YCRGKVLGKG…LDDIIRHDFF (253 aa)). Residues 85–93 (LGKGGFAKC) and K108 each bind ATP. The Proton acceptor role is filled by D202. At T236 the chain carries Phosphothreonine. The disordered stretch occupies residues 403–432 (SITQQPSKHRADEEPQPPPTTVARSGTSAV). POLO box domains lie at 500–578 (WVTK…YMEE) and 598–682 (YLLQ…QRCN).

The protein belongs to the protein kinase superfamily. Ser/Thr protein kinase family. CDC5/Polo subfamily. As to quaternary structure, interacts with NSF; causing NSF dissociation from GRIA2. Interacts with CIB1. In terms of processing, catalytic activity is enhanced by phosphorylation of Thr-236. As to expression, brain, lung and heart.

It localises to the cytoplasm. It is found in the cytoskeleton. The protein resides in the microtubule organizing center. The protein localises to the centrosome. Its subcellular location is the centriole. It localises to the cell projection. It is found in the dendrite. It catalyses the reaction L-seryl-[protein] + ATP = O-phospho-L-seryl-[protein] + ADP + H(+). The enzyme catalyses L-threonyl-[protein] + ATP = O-phospho-L-threonyl-[protein] + ADP + H(+). Activated by phosphorylation of Thr-236. Once activated, activity is stimulated by binding target proteins. Functionally, tumor suppressor serine/threonine-protein kinase involved in synaptic plasticity, centriole duplication and G1/S phase transition. Polo-like kinases act by binding and phosphorylating proteins that are already phosphorylated on a specific motif recognized by the POLO box domains. Phosphorylates CPAP, NPM1, RAPGEF2, RASGRF1, SNCA, SIPA1L1 and SYNGAP1. Plays a key role in synaptic plasticity and memory by regulating the Ras and Rap protein signaling: required for overactivity-dependent spine remodeling by phosphorylating the Ras activator RASGRF1 and the Rap inhibitor SIPA1L1 leading to their degradation by the proteasome. Conversely, phosphorylates the Rap activator RAPGEF2 and the Ras inhibitor SYNGAP1, promoting their activity. Also regulates synaptic plasticity independently of kinase activity, via its interaction with NSF that disrupts the interaction between NSF and the GRIA2 subunit of AMPARs, leading to a rapid rundown of AMPAR-mediated current that occludes long term depression. Required for procentriole formation and centriole duplication by phosphorylating CPAP and NPM1, respectively. Its induction by p53/TP53 suggests that it may participate in the mitotic checkpoint following stress. The chain is Serine/threonine-protein kinase PLK2 (Plk2) from Mus musculus (Mouse).